The sequence spans 485 residues: Glutamate--tRNA ligase (485 aa).

The 'HIGH' region signature appears at 11-21 (PSPTGYMHVGN). Positions 108, 110, 135, and 137 each coordinate Zn(2+). A 'KMSKS' region motif is present at residues 252–256 (KLSKR). Lysine 255 provides a ligand contact to ATP.

It belongs to the class-I aminoacyl-tRNA synthetase family. Glutamate--tRNA ligase type 1 subfamily. As to quaternary structure, monomer. Zn(2+) is required as a cofactor.

The protein resides in the cytoplasm. It catalyses the reaction tRNA(Glu) + L-glutamate + ATP = L-glutamyl-tRNA(Glu) + AMP + diphosphate. In terms of biological role, catalyzes the attachment of glutamate to tRNA(Glu) in a two-step reaction: glutamate is first activated by ATP to form Glu-AMP and then transferred to the acceptor end of tRNA(Glu). The sequence is that of Glutamate--tRNA ligase from Clostridium botulinum (strain Okra / Type B1).